Reading from the N-terminus, the 476-residue chain is Ankyrin repeat, SAM and basic leucine zipper domain-containing protein 1 (476 aa).

A phosphoserine mark is found at Ser18 and Ser21. ANK repeat units follow at residues 46-75 (EKNETFKKALTTGDISLVEELLDSGISIDS), 79-108 (YGWTPLMYAASVANVELVRVLLDRGANASF), 111-145 (DKQTILITACSARGSEEQILKCVELLLSRNADPNV), 149-178 (RLMTPVMYAARAGHPQVVAVLVAYGAEVNT), 182-211 (NGYTALTWAARQGHKNVILKLLELGADKML), and 215-244 (DGKTPSEIAKRNKHLEIFNFLSLSLNPLEG). The 63-residue stretch at 273 to 335 (SYAAFEDLEI…KILAALKELE (63 aa)) folds into the SAM domain.

Interacts with DDX4, PIWIL1, RANBP9 and TDRD1.

The protein localises to the cytoplasm. In terms of biological role, plays a central role during spermatogenesis by repressing transposable elements and preventing their mobilization, which is essential for the germline integrity. Acts via the piRNA metabolic process, which mediates the repression of transposable elements during meiosis by forming complexes composed of piRNAs and Piwi proteins and governs the methylation and subsequent repression of transposons. Its association with pi-bodies suggests a participation in the primary piRNAs metabolic process. Required prior to the pachytene stage to facilitate the production of multiple types of piRNAs, including those associated with repeats involved in the regulation of retrotransposons. May act by mediating protein-protein interactions during germ cell maturation. This Dasypus novemcinctus (Nine-banded armadillo) protein is Ankyrin repeat, SAM and basic leucine zipper domain-containing protein 1 (ASZ1).